A 228-amino-acid polypeptide reads, in one-letter code: MYKLLMFRDDKLLRRALTHRSYVNENPEEGEHNERLEFLGDAILNFLSGEYLYRSHPDRGEDELTRRRSALVDEKQLAKFAIEVGLDFKMRLGKGAIRDGGYQNPNLLSSTFEAVIGAYYLDNNSNIEAVRAIIEPLFESVPEQIVVVRSNVDSKNRFQEWVQRNIGPTPPKYLTEQIGGFSHAPEFKATVLVGEKEYGEGIGKNKKDAEKAAAENALANLNKQELLP.

The region spanning 1 to 124 is the RNase III domain; the sequence is MYKLLMFRDD…VIGAYYLDNN (124 aa). Glu37 is a Mg(2+) binding site. The active site involves Asp41. Positions 110 and 113 each coordinate Mg(2+). The active site involves Glu113. Residues 153-223 enclose the DRBM domain; that stretch reads DSKNRFQEWV…AENALANLNK (71 aa).

The protein belongs to the ribonuclease III family. As to quaternary structure, homodimer. It depends on Mg(2+) as a cofactor.

The protein resides in the cytoplasm. The catalysed reaction is Endonucleolytic cleavage to 5'-phosphomonoester.. Digests double-stranded RNA. Involved in the processing of primary rRNA transcript to yield the immediate precursors to the large and small rRNAs (23S and 16S). Processes some mRNAs, and tRNAs when they are encoded in the rRNA operon. Processes pre-crRNA and tracrRNA of type II CRISPR loci if present in the organism. The chain is Ribonuclease 3 1 from Nostoc sp. (strain PCC 7120 / SAG 25.82 / UTEX 2576).